The following is a 164-amino-acid chain: UPF0225 protein Shewana3_2159 (164 aa).

The protein belongs to the UPF0225 family.

The chain is UPF0225 protein Shewana3_2159 from Shewanella sp. (strain ANA-3).